The chain runs to 1189 residues: Putative structural protein VP1 (1189 aa).

The region spanning 981 to 1187 (TPTKKLLSSD…YVNALRGDLS (207 aa)) is the PPPDE domain. Active-site residues include H1004 and C1147.

The protein localises to the virion. The chain is Putative structural protein VP1 (S1) from Aedes pseudoscutellaris reovirus (isolate France) (ApRV).